The chain runs to 544 residues: Matrilin-1 (544 aa).

Positions 1–26 (MRALSGPRLMLCGLLLLLFQAPCALG) are cleaved as a signal peptide. The region spanning 42–217 (DLVFVVDSSR…SVIEKLSKKF (176 aa)) is the VWFA 1 domain. Asn77 carries N-linked (GlcNAc...) asparagine glycosylation. In terms of domain architecture, EGF-like spans 224 to 264 (VSDLCATGDHDCEQVCVSSPGSYTCACREGFTLNSDGKTCN). 3 cysteine pairs are disulfide-bonded: Cys228–Cys239, Cys235–Cys248, and Cys250–Cys263. Residues 276 to 448 (DLVFLIDGSK…KTINQIGKKL (173 aa)) form the VWFA 2 domain. The N-linked (GlcNAc...) asparagine glycan is linked to Asn345.

Homotrimer. Part of a complex composed of MATN1 (via VWFA1 domain), type 2 collagens and type 6 collagens. Forms a complex (via covalent bonds) with ACAN; the interaction increases in abundance with increasing age of the organism via an increase in occupancy of MATN1 binding sites. Interacts with COMP. N-glycosylated; reduces binding affinity for type 2 collagens. In terms of tissue distribution, expressed in trachea from fetus into adulthood (at protein level).

Its subcellular location is the secreted. The protein localises to the extracellular space. It localises to the extracellular matrix. In terms of biological role, a major component of the extracellular matrix of non-articular cartilage. Binds to type 2 collagens and forms long concatenated protein networks as part of the extracellular matrix. Required for the network-like organization and bundling of collagen fibrils surrounding chondrocytes in the zones of maturation and hypertrophy. Required for mechanotransduction and adaption to mechanical loading in cartilage chondrocytes, resulting in an increase in expression of the extracellular matrix components ACAN and COL2A1. Acts as a moderator of angiogenesis in response to injury. In Bos taurus (Bovine), this protein is Matrilin-1.